A 211-amino-acid polypeptide reads, in one-letter code: Bacteriorhodopsin (211 aa).

A helical transmembrane segment spans residues Ile-1–Ala-19. The Cytoplasmic portion of the chain corresponds to Arg-20–Tyr-33. Residues Ile-34 to Leu-52 form a helical membrane-spanning segment. At Gly-53–Ile-68 the chain is on the extracellular side. The chain crosses the membrane as a helical span at residues Tyr-69–Asp-86. The Cytoplasmic segment spans residues Leu-87–Thr-97. Residues Ile-98 to Leu-117 traverse the membrane as a helical segment. Topologically, residues Ser-118–Arg-130 are extracellular. The chain crosses the membrane as a helical span at residues Leu-131 to Ser-150. Topologically, residues Ser-151–Lys-168 are cytoplasmic. Residues Thr-169–Ile-187 traverse the membrane as a helical segment. Residues Gly-188–Ile-199 lie on the Extracellular side of the membrane. A helical transmembrane segment spans residues Glu-200 to Ala-211.

It belongs to the archaeal/bacterial/fungal opsin family.

The protein resides in the cell membrane. Its function is as follows. Light-driven proton pump. The protein is Bacteriorhodopsin (bop) of Halobacterium halobium (strain port).